Consider the following 386-residue polypeptide: MGFLFTSESVNEGHPDKLADQISDGILDACLEQDPDSKVACETATKTNMVMVFGEITTKAKVDYEAVVRQVCRDVGFISNETGLDGNNCRVLVELHDQSPDIGQGVHGMGTKSLEEIGAGDQGHMFGYATDETPELMPLTHVLATKLGHRLTVVRKDGTCPWVLPDGKTQVTIEYENEGGAMIPKRVHTILISTQHIEGVSNEKIAEDLMNEVIKKVVPEKYLDADTIFHLNPSGRFVIGGPDGDAGLTGRKIIIDTYGGWGAHGGGAFSGKDPTKVDRSGAYIARQVAKSIVAAGLARRALFQISYAIGVAQPLSIHVDTYGSGKIPDSEILEKVKEKFDFRAGMIGKSLDLKRGGNKRYQTTAAYGHFGRDDTDVFTWEKVVPL.

Mg(2+) is bound at residue Glu8. Residue His14 participates in ATP binding. Glu42 serves as a coordination point for K(+). 2 residues coordinate L-methionine: Glu55 and Gln98. Residues 166 to 168, 234 to 237, Asp245, 251 to 252, Ala268, Lys272, and Lys276 each bind ATP; these read DGK, SGRF, and RK. Asp245 lines the L-methionine pocket. Residue Lys276 participates in L-methionine binding.

It belongs to the AdoMet synthase family. Homotetramer. Mn(2+) is required as a cofactor. Mg(2+) serves as cofactor. Requires Co(2+) as cofactor. It depends on K(+) as a cofactor.

The protein localises to the cytoplasm. It carries out the reaction L-methionine + ATP + H2O = S-adenosyl-L-methionine + phosphate + diphosphate. It participates in amino-acid biosynthesis; S-adenosyl-L-methionine biosynthesis; S-adenosyl-L-methionine from L-methionine: step 1/1. Functionally, catalyzes the formation of S-adenosylmethionine from methionine and ATP. The reaction comprises two steps that are both catalyzed by the same enzyme: formation of S-adenosylmethionine (AdoMet) and triphosphate, and subsequent hydrolysis of the triphosphate. In Ostreococcus tauri, this protein is S-adenosylmethionine synthase (METK).